Reading from the N-terminus, the 490-residue chain is Cytochrome P450 2C26 (490 aa).

Cysteine 435 contacts heme.

It belongs to the cytochrome P450 family. Heme is required as a cofactor.

The protein localises to the endoplasmic reticulum membrane. It is found in the microsome membrane. It catalyses the reaction an organic molecule + reduced [NADPH--hemoprotein reductase] + O2 = an alcohol + oxidized [NADPH--hemoprotein reductase] + H2O + H(+). Catalyzes the hydroxylation of tolbutamide and the N-demethylation of aminopyrine and benzphetamine. In Mesocricetus auratus (Golden hamster), this protein is Cytochrome P450 2C26 (CYP2C26).